A 404-amino-acid polypeptide reads, in one-letter code: Argininosuccinate synthase (404 aa).

9-17 (AYSGGLDTS) contributes to the ATP binding site. Residue tyrosine 86 coordinates L-citrulline. An ATP-binding site is contributed by glycine 116. The L-aspartate site is built by threonine 118, asparagine 122, and aspartate 123. Asparagine 122 contacts L-citrulline. Residues arginine 126, serine 174, serine 183, glutamate 259, and tyrosine 271 each contribute to the L-citrulline site.

This sequence belongs to the argininosuccinate synthase family. Type 1 subfamily. Homotetramer.

The protein localises to the cytoplasm. It carries out the reaction L-citrulline + L-aspartate + ATP = 2-(N(omega)-L-arginino)succinate + AMP + diphosphate + H(+). Its pathway is amino-acid biosynthesis; L-arginine biosynthesis; L-arginine from L-ornithine and carbamoyl phosphate: step 2/3. The sequence is that of Argininosuccinate synthase from Listeria welshimeri serovar 6b (strain ATCC 35897 / DSM 20650 / CCUG 15529 / CIP 8149 / NCTC 11857 / SLCC 5334 / V8).